The chain runs to 249 residues: NAD(P)H-quinone oxidoreductase subunit K (249 aa).

[4Fe-4S] cluster contacts are provided by Cys-65, Cys-66, Cys-130, and Cys-161.

The protein belongs to the complex I 20 kDa subunit family. In terms of assembly, NDH-1 can be composed of about 15 different subunits; different subcomplexes with different compositions have been identified which probably have different functions. [4Fe-4S] cluster serves as cofactor.

The protein localises to the cellular thylakoid membrane. It carries out the reaction a plastoquinone + NADH + (n+1) H(+)(in) = a plastoquinol + NAD(+) + n H(+)(out). It catalyses the reaction a plastoquinone + NADPH + (n+1) H(+)(in) = a plastoquinol + NADP(+) + n H(+)(out). Functionally, NDH-1 shuttles electrons from an unknown electron donor, via FMN and iron-sulfur (Fe-S) centers, to quinones in the respiratory and/or the photosynthetic chain. The immediate electron acceptor for the enzyme in this species is believed to be plastoquinone. Couples the redox reaction to proton translocation, and thus conserves the redox energy in a proton gradient. Cyanobacterial NDH-1 also plays a role in inorganic carbon-concentration. The protein is NAD(P)H-quinone oxidoreductase subunit K of Prochlorococcus marinus (strain NATL2A).